The primary structure comprises 195 residues: MLIAFEGIDGSGKTTQAKKLYEYLKQKGYFVSLYREPGGTKVGEVLREILLTEELDERTELLLFEASRSKLIEEKIIPDLKRDKVVILDRFVLSTIAYQGYGKGLDVEFIKNLNEFATRGVKPDITLLLDIPVDIALRRLKEKNRFENKEFLEKVRKGFLELAKEEENVVVIDASGEEEEVFKEILRALSGVLRV.

7–14 (GIDGSGKT) provides a ligand contact to ATP.

This sequence belongs to the thymidylate kinase family.

It catalyses the reaction dTMP + ATP = dTDP + ADP. Phosphorylation of dTMP to form dTDP in both de novo and salvage pathways of dTTP synthesis. This is Thymidylate kinase (tmk) from Aquifex aeolicus (strain VF5).